A 570-amino-acid polypeptide reads, in one-letter code: Potassium-transporting ATPase potassium-binding subunit (570 aa).

A run of 11 helical transmembrane segments spans residues 7–27 (AEIA…GVFL), 65–85 (AYAL…YAVL), 95–115 (PQGF…SFIT), 135–155 (LVLT…AAAL), 179–199 (LYLL…LGLP), 254–274 (LTNL…FFAF), 286–306 (ALVI…YATE), 383–403 (GVAI…LMVG), 422–442 (ILAV…AAVL), 489–509 (LGIA…AIAG), and 528–548 (GGLF…LQFF).

Belongs to the KdpA family. In terms of assembly, the system is composed of three essential subunits: KdpA, KdpB and KdpC.

It localises to the cell inner membrane. Part of the high-affinity ATP-driven potassium transport (or Kdp) system, which catalyzes the hydrolysis of ATP coupled with the electrogenic transport of potassium into the cytoplasm. This subunit binds the periplasmic potassium ions and delivers the ions to the membrane domain of KdpB through an intramembrane tunnel. This is Potassium-transporting ATPase potassium-binding subunit from Caulobacter vibrioides (strain ATCC 19089 / CIP 103742 / CB 15) (Caulobacter crescentus).